A 950-amino-acid polypeptide reads, in one-letter code: UPF0182 protein P9303_14611 (950 aa).

9 helical membrane passes run 20-40, 53-73, 102-122, 141-161, 173-193, 209-229, 259-279, 308-328, and 335-355; these read LLLS…WLWF, WLWQ…CQLW, LLGC…LAWL, IWAL…MLGN, CFCF…ALAI, FGLG…AQLV, CDVM…LLWL, SLAS…PWIQ, and LIAS…APFV.

It belongs to the UPF0182 family.

It is found in the cell membrane. The sequence is that of UPF0182 protein P9303_14611 from Prochlorococcus marinus (strain MIT 9303).